Here is a 414-residue protein sequence, read N- to C-terminus: Nucleoporin NUP42 (414 aa).

Residues 1 to 25 (MPVCNFFLQGRCRYGDTCWNEHPTG) form a C3H1-type zinc finger. Disordered regions lie at residues 24–73 (TGGR…RGAA) and 200–221 (PPAS…TSGF). FG repeat units lie at residues 43–44 (FG), 207–208 (FG), 214–215 (FG), 221–222 (FG), 233–234 (FG), 238–239 (FG), 257–258 (FG), 268–269 (FG), 280–281 (FG), 306–307 (FG), 325–326 (FG), 329–330 (FG), 335–336 (FG), 341–342 (FG), 347–348 (FG), 351–352 (FG), and 362–363 (FG).

As to quaternary structure, probable component of the nuclear pore complex (NPC).

The protein resides in the nucleus. It localises to the nuclear pore complex. Its subcellular location is the nucleus membrane. Functionally, required for the export of mRNAs containing poly(A) tails from the nucleus into the cytoplasm. The sequence is that of Nucleoporin NUP42 (nup42) from Danio rerio (Zebrafish).